The following is a 608-amino-acid chain: MLWRCNWVKQRKRILNTLSFSSIHGQYPREYTAAKPLTHDNVYSCLRESPADLKTLNFFFWCAKQNNYFHDDRAFDHMVGVVEKLTREYYSIDRIIERLKISGCEIKPRVFLLLLEIFWRGHIYDKAIEVYTGMSSFGFVPNTRAMNMMMDVNFKLNVVNGALEIFEGIRFRNFFSFDIALSHFCSRGGRGDLVGVKIVLKRMIGEGFYPNRERFGQILRLCCRTGCVSEAFQVVGLMICSGISVSVNVWSMLVSGFFRSGEPQKAVDLFNKMIQIGCSPNLVTYTSLIKGFVDLGMVDEAFTVLSKVQSEGLAPDIVLCNLMIHTYTRLGRFEEARKVFTSLEKRKLVPDQYTFASILSSLCLSGKFDLVPRITHGIGTDFDLVTGNLLSNCFSKIGYNSYALKVLSIMSYKDFALDCYTYTVYLSALCRGGAPRAAIKMYKIIIKEKKHLDAHFHSAIIDSLIELGKYNTAVHLFKRCILEKYPLDVVSYTVAIKGLVRAKRIEEAYSLCCDMKEGGIYPNRRTYRTIISGLCKEKETEKVRKILRECIQEGVELDPNTKFQVYSLLSRYRGDFSEFRSVFEKWKSEFTENVDVSDSDDELFVSVG.

PPR repeat units lie at residues Lys107 to Pro141, Asn142 to Arg172, Asn173 to Pro210, Asn211 to Val245, Ser246 to Pro280, Asn281 to Pro315, Asp316 to Pro350, Asp351 to Asp381, Asp383 to Leu417, Asp418 to Leu452, Asp453 to Leu487, Asp488 to Pro522, and Asn523 to Leu557.

This sequence belongs to the PPR family. P subfamily.

The polypeptide is Putative pentatricopeptide repeat-containing protein At1g16830 (Arabidopsis thaliana (Mouse-ear cress)).